Consider the following 255-residue polypeptide: Glutamate racemase (255 aa).

Residues 7 to 8 (DS) and 39 to 40 (YG) contribute to the substrate site. C70 serves as the catalytic Proton donor/acceptor. 71 to 72 (NT) lines the substrate pocket. The active-site Proton donor/acceptor is C181. 182–183 (TH) contacts substrate.

This sequence belongs to the aspartate/glutamate racemases family.

It carries out the reaction L-glutamate = D-glutamate. It participates in cell wall biogenesis; peptidoglycan biosynthesis. Functionally, provides the (R)-glutamate required for cell wall biosynthesis. The sequence is that of Glutamate racemase from Helicobacter pylori (strain HPAG1).